Consider the following 209-residue polypeptide: Eukaryotic translation initiation factor isoform 4E-2 (209 aa).

A disordered region spans residues 1-29 (MAEVEAALPVAATETPEVAAEGDAGAAEA). The segment covering 9-29 (PVAATETPEVAAEGDAGAAEA) has biased composition (low complexity). MRNA is bound by residues 51 to 56 (PGAAWG), K83, and 101 to 102 (WE). Residues C106 and C145 are joined by a disulfide bond. Residues 152–157 (RQRQDK) and 197–200 (RSQK) each bind mRNA.

The protein belongs to the eukaryotic initiation factor 4E family. As to quaternary structure, EIF4F is a multi-subunit complex, the composition of which varies with external and internal environmental conditions. It is composed of at least EIF4A, EIF4E and EIF4G. EIF4E is also known to interact with other partners. In higher plants two isoforms of EIF4F have been identified, named isoform EIF4F and isoform EIF(iso)4F. Isoform EIF4F has subunits p220 and p26, whereas isoform EIF(iso)4F has subunits p82 and p28. In terms of processing, according to the redox status, the Cys-106-Cys-145 disulfide bridge may have a role in regulating protein function by affecting its ability to bind capped mRNA.

It is found in the cytoplasm. Its subcellular location is the nucleus. Functionally, component of the protein complex eIF4F, which is involved in the recognition of the mRNA cap, ATP-dependent unwinding of 5'-terminal secondary structure and recruitment of mRNA to the ribosome. Recognizes and binds the 7-methylguanosine-containing mRNA cap during an early step in the initiation of protein synthesis and facilitates ribosome binding by inducing the unwinding of the mRNAs secondary structures. This chain is Eukaryotic translation initiation factor isoform 4E-2, found in Triticum aestivum (Wheat).